A 152-amino-acid chain; its full sequence is Arginine repressor (152 aa).

This sequence belongs to the ArgR family.

The protein resides in the cytoplasm. The protein operates within amino-acid biosynthesis; L-arginine biosynthesis [regulation]. In terms of biological role, regulates arginine biosynthesis genes. This Caldicellulosiruptor bescii (strain ATCC BAA-1888 / DSM 6725 / KCTC 15123 / Z-1320) (Anaerocellum thermophilum) protein is Arginine repressor.